Consider the following 517-residue polypeptide: 2-isopropylmalate synthase (517 aa).

Residues 6 to 267 (IIVFDTTLRD…YTTINTPEIY (262 aa)) enclose the Pyruvate carboxyltransferase domain. 4 residues coordinate Mn(2+): D15, H201, H203, and N237. Positions 393 to 517 (DLIGLQISDC…RLSKSSEHQV (125 aa)) are regulatory domain.

It belongs to the alpha-IPM synthase/homocitrate synthase family. LeuA type 1 subfamily. Homodimer. The cofactor is Mn(2+).

It is found in the cytoplasm. It catalyses the reaction 3-methyl-2-oxobutanoate + acetyl-CoA + H2O = (2S)-2-isopropylmalate + CoA + H(+). The protein operates within amino-acid biosynthesis; L-leucine biosynthesis; L-leucine from 3-methyl-2-oxobutanoate: step 1/4. Its function is as follows. Catalyzes the condensation of the acetyl group of acetyl-CoA with 3-methyl-2-oxobutanoate (2-ketoisovalerate) to form 3-carboxy-3-hydroxy-4-methylpentanoate (2-isopropylmalate). This is 2-isopropylmalate synthase from Aliarcobacter butzleri (strain RM4018) (Arcobacter butzleri).